Consider the following 461-residue polypeptide: Ornithine decarboxylase (461 aa).

Residue Lys-69 is modified to N6-(pyridoxal phosphate)lysine. Pyridoxal 5'-phosphate contacts are provided by residues Ser-200, Gly-237, and 274–277 (EPGR). Ser-303 is subject to Phosphoserine; by CK2. 331 to 332 (YD) is a substrate binding site. Catalysis depends on Cys-360, which acts as the Proton donor; shared with dimeric partner. Cys-360 carries the post-translational modification S-nitrosocysteine. Asp-361 lines the substrate pocket. A pyridoxal 5'-phosphate-binding site is contributed by Tyr-389.

It belongs to the Orn/Lys/Arg decarboxylase class-II family. In terms of assembly, homodimer. Only the dimer is catalytically active, as the active sites are constructed of residues from both monomers. Does not form a heterodimer with AZIN2. Pyridoxal 5'-phosphate is required as a cofactor. In terms of tissue distribution, expressed during testis development in the outer part of the seminiferous tubules.

It catalyses the reaction L-ornithine + H(+) = putrescine + CO2. The protein operates within amine and polyamine biosynthesis; putrescine biosynthesis via L-ornithine pathway; putrescine from L-ornithine: step 1/1. With respect to regulation, inhibited by antizymes (AZs) OAZ1, OAZ2 and OAZ3 in response to polyamine levels. AZs inhibit the assembly of the functional homodimer by binding to ODC monomers. Additionally, OAZ1 targets ODC monomers for ubiquitin-independent proteolytic destruction by the 26S proteasome. In terms of biological role, catalyzes the first and rate-limiting step of polyamine biosynthesis that converts ornithine into putrescine, which is the precursor for the polyamines, spermidine and spermine. Polyamines are essential for cell proliferation and are implicated in cellular processes, ranging from DNA replication to apoptosis. The sequence is that of Ornithine decarboxylase (Odc1) from Mus musculus (Mouse).